A 251-amino-acid polypeptide reads, in one-letter code: 2,3-bisphosphoglycerate-dependent phosphoglycerate mutase (251 aa).

Residues 13 to 20, 26 to 27, arginine 65, 92 to 95, lysine 103, 119 to 120, and 186 to 187 contribute to the substrate site; these read RHGESEWN, TG, ERHY, RR, and GN. Histidine 14 functions as the Tele-phosphohistidine intermediate in the catalytic mechanism. Catalysis depends on glutamate 92, which acts as the Proton donor/acceptor.

Belongs to the phosphoglycerate mutase family. BPG-dependent PGAM subfamily.

It catalyses the reaction (2R)-2-phosphoglycerate = (2R)-3-phosphoglycerate. It functions in the pathway carbohydrate degradation; glycolysis; pyruvate from D-glyceraldehyde 3-phosphate: step 3/5. Its function is as follows. Catalyzes the interconversion of 2-phosphoglycerate and 3-phosphoglycerate. This is 2,3-bisphosphoglycerate-dependent phosphoglycerate mutase from Rhodococcus jostii (strain RHA1).